A 504-amino-acid polypeptide reads, in one-letter code: Probable cytosol aminopeptidase (504 aa).

Mn(2+)-binding residues include lysine 274 and aspartate 279. The active site involves lysine 286. Residues aspartate 297, aspartate 356, and glutamate 358 each contribute to the Mn(2+) site. The active site involves arginine 360.

It belongs to the peptidase M17 family. The cofactor is Mn(2+).

It is found in the cytoplasm. It carries out the reaction Release of an N-terminal amino acid, Xaa-|-Yaa-, in which Xaa is preferably Leu, but may be other amino acids including Pro although not Arg or Lys, and Yaa may be Pro. Amino acid amides and methyl esters are also readily hydrolyzed, but rates on arylamides are exceedingly low.. The enzyme catalyses Release of an N-terminal amino acid, preferentially leucine, but not glutamic or aspartic acids.. Presumably involved in the processing and regular turnover of intracellular proteins. Catalyzes the removal of unsubstituted N-terminal amino acids from various peptides. This chain is Probable cytosol aminopeptidase, found in Blochmanniella floridana.